The chain runs to 225 residues: UPF0758 protein Sez_1052 (225 aa).

The MPN domain maps to 102–224; it reads PVLSSAQVAE…YYSFREKSDL (123 aa). Zn(2+) is bound by residues histidine 173, histidine 175, and aspartate 186. The short motif at 173-186 is the JAMM motif element; the sequence is HNHPSGLTKPSAND.

The protein belongs to the UPF0758 family.

This chain is UPF0758 protein Sez_1052, found in Streptococcus equi subsp. zooepidemicus (strain MGCS10565).